Here is a 1109-residue protein sequence, read N- to C-terminus: Coiled-coil domain-containing protein 158 (1109 aa).

A compositionally biased stretch (basic and acidic residues) spans 1 to 12 (MESKACESKNED). Residues 1–31 (MESKACESKNEDLLPSGITSKGGSSSPFFVT) are disordered. A compositionally biased stretch (polar residues) spans 17–31 (GITSKGGSSSPFFVT). 2 coiled-coil regions span residues 71-166 (GKEH…MLKD) and 242-828 (VEDQ…QEQE). 2 disordered regions span residues 843–897 (LQGP…DPTR) and 952–1061 (HRSN…TGKT). Composition is skewed to polar residues over residues 862–882 (ASVT…SFLS), 953–970 (RSNN…SSET), and 988–998 (SCFTFTSTASP). Over residues 999–1019 (SGKMSASRSFSSSPKKSPVHS) the composition is skewed to low complexity. Composition is skewed to polar residues over residues 1020 to 1037 (LLTS…QYRS) and 1043 to 1061 (SPTS…TGKT). Residues 1053–1109 (PSLETTGKTCQKLQNRLESLQTLVEDLQLKNQAMSSMIRNQEKRIQKVKDQEKMLLK) are a coiled coil.

The sequence is that of Coiled-coil domain-containing protein 158 (Ccdc158) from Mus musculus (Mouse).